Here is a 357-residue protein sequence, read N- to C-terminus: Chorismate synthase (357 aa).

Basic and acidic residues predominate over residues 38–49 (EKDIQPDLDRRK). Residues 38-60 (EKDIQPDLDRRKPGTSRYTTPRR) are disordered. Residues R48 and R54 each coordinate NADP(+). FMN contacts are provided by residues 125–127 (RSS), 243–244 (NA), G283, 298–302 (KPTSS), and R324.

It belongs to the chorismate synthase family. As to quaternary structure, homotetramer. Requires FMNH2 as cofactor.

It catalyses the reaction 5-O-(1-carboxyvinyl)-3-phosphoshikimate = chorismate + phosphate. It participates in metabolic intermediate biosynthesis; chorismate biosynthesis; chorismate from D-erythrose 4-phosphate and phosphoenolpyruvate: step 7/7. In terms of biological role, catalyzes the anti-1,4-elimination of the C-3 phosphate and the C-6 proR hydrogen from 5-enolpyruvylshikimate-3-phosphate (EPSP) to yield chorismate, which is the branch point compound that serves as the starting substrate for the three terminal pathways of aromatic amino acid biosynthesis. This reaction introduces a second double bond into the aromatic ring system. The protein is Chorismate synthase of Haemophilus influenzae (strain PittEE).